The chain runs to 647 residues: Calmodulin-binding protein 60 B (647 aa).

The segment covering 1-10 has biased composition (polar residues); the sequence is MMDSGNNNMN. The tract at residues 1–26 is disordered; that stretch reads MMDSGNNNMNRAKRNLDGNDDDQPER. Residues 8–85 are calmodulin-binding; sequence NMNRAKRNLD…TGSSGSSPKR (78 aa). Residues 12 to 19 carry the Nuclear localization signal motif; sequence AKRNLDGN. A DNA-binding region spans residues 155–278; that stretch reads EDDEDWTQEE…AFHKKLTAEG (124 aa).

This sequence belongs to the plant ACBP60 protein family. As to quaternary structure, interacts with calmodulin (CaM). As to expression, expressed in leaves, stems, flowers, developing seeds and root.

The protein localises to the nucleus. Functionally, transcription activator that binds DNA in a sequence-specific manner, likely 5'-GAAATTTTGG-3', to promote the expression of target genes. The chain is Calmodulin-binding protein 60 B from Arabidopsis thaliana (Mouse-ear cress).